The primary structure comprises 481 residues: UDP-N-acetylmuramoyl-L-alanyl-D-glutamate--L-lysine ligase (481 aa).

Residue Ser-42 participates in UDP-N-acetyl-alpha-D-muramoyl-L-alanyl-D-glutamate binding. An ATP-binding site is contributed by Gly-118–Thr-124. UDP-N-acetyl-alpha-D-muramoyl-L-alanyl-D-glutamate-binding positions include Asn-158, Thr-160–Thr-161, Ser-187, and Arg-195. Residue Lys-229 is modified to N6-carboxylysine. The L-lysine recognition motif signature appears at Asp-404–Asn-407.

The protein belongs to the MurCDEF family. MurE subfamily. Post-translationally, carboxylation is probably crucial for Mg(2+) binding and, consequently, for the gamma-phosphate positioning of ATP.

The protein resides in the cytoplasm. It carries out the reaction UDP-N-acetyl-alpha-D-muramoyl-L-alanyl-D-glutamate + L-lysine + ATP = UDP-N-acetyl-alpha-D-muramoyl-L-alanyl-gamma-D-glutamyl-L-lysine + ADP + phosphate + H(+). It functions in the pathway cell wall biogenesis; peptidoglycan biosynthesis. Catalyzes the addition of L-lysine to the nucleotide precursor UDP-N-acetylmuramoyl-L-alanyl-D-glutamate (UMAG) in the biosynthesis of bacterial cell-wall peptidoglycan. The protein is UDP-N-acetylmuramoyl-L-alanyl-D-glutamate--L-lysine ligase of Streptococcus thermophilus (strain ATCC BAA-491 / LMD-9).